The primary structure comprises 247 residues: MEPALISPELLDGSSLLPHSSADESSSTGLSLGSLLSSSNDLSSETSMPQFEQLERMLGSPTIANHVDFTTQSTDLGFLSDPNITLSSIELTELFSIPSDNASLMPEPSRQPSPLKAPDLQTTPPATGLIDSEANPTSVPLGNSVEQSADVKQLRKKYHEKYKERNRVAAGKSRQKQVDLIELLQAEQREEERRRKALERELSQIHKELLDLKQELQHHIRIANCMTMMSHGAHMQTLGLLAQDMLR.

Disordered regions lie at residues 1-48 and 100-143; these read MEPA…ETSM and DNAS…PLGN. Residues 23-47 are compositionally biased toward low complexity; sequence DESSSTGLSLGSLLSSSNDLSSETS. Positions 134 to 143 are enriched in polar residues; the sequence is ANPTSVPLGN. The basic motif stretch occupies residues 156–196; the sequence is KKYHEKYKERNRVAAGKSRQKQVDLIELLQAEQREEERRRK. The bZIP domain occupies 156 to 219; that stretch reads KKYHEKYKER…LDLKQELQHH (64 aa). A leucine-zipper region spans residues 198-212; sequence LERELSQIHKELLDL.

It is found in the nucleus. Its function is as follows. Transcription factor; part of the gene cluster that mediates the biosynthesis of ochratoxin A (OTA), a mycotoxin demonstrated to have nephrotoxic, immunotoxic, genotoxic, neurotoxic, and teratogenic properties. Positively regulates the expression of the cluster genes otaA, otaB, otaC and otaD, and the subsequent production of OTA. This Aspergillus carbonarius (strain ITEM 5010) protein is Transcription factor otaR1.